We begin with the raw amino-acid sequence, 84 residues long: Acyl carrier protein (84 aa).

Residues Ser-4–Val-80 enclose the Carrier domain. Ser-40 carries the post-translational modification O-(pantetheine 4'-phosphoryl)serine.

It belongs to the acyl carrier protein (ACP) family. Post-translationally, 4'-phosphopantetheine is transferred from CoA to a specific serine of apo-ACP by AcpS. This modification is essential for activity because fatty acids are bound in thioester linkage to the sulfhydryl of the prosthetic group.

Its subcellular location is the cytoplasm. Its pathway is lipid metabolism; fatty acid biosynthesis. In terms of biological role, carrier of the growing fatty acid chain in fatty acid biosynthesis. In Nostoc sp. (strain PCC 7120 / SAG 25.82 / UTEX 2576), this protein is Acyl carrier protein.